An 86-amino-acid chain; its full sequence is Superoxide dismutase [Cu-Zn] (86 aa).

The tract at residues 1 to 26 (AKEKGGKLTAGLAAGGHWNPNKAPHH) is disordered. Residues 7 to 16 (KLTAGLAAGG) show a composition bias toward low complexity. H17 contacts Cu cation. Zn(2+) is bound by residues H17, H26, H35, and D38. Cu cation is bound at residue H73.

This sequence belongs to the Cu-Zn superoxide dismutase family. In terms of assembly, homodimer. Cu cation is required as a cofactor. The cofactor is Zn(2+).

The protein resides in the periplasm. The catalysed reaction is 2 superoxide + 2 H(+) = H2O2 + O2. Its function is as follows. Destroys radicals which are normally produced within the cells and which are toxic to biological systems. The chain is Superoxide dismutase [Cu-Zn] (sodC) from Mannheimia haemolytica (Pasteurella haemolytica).